The chain runs to 187 residues: Threonylcarbamoyl-AMP synthase (187 aa).

A YrdC-like domain is found at 4-187; sequence TLDLDRAVAA…DARSGQILRD (184 aa).

This sequence belongs to the SUA5 family. TsaC subfamily.

The protein resides in the cytoplasm. It carries out the reaction L-threonine + hydrogencarbonate + ATP = L-threonylcarbamoyladenylate + diphosphate + H2O. In terms of biological role, required for the formation of a threonylcarbamoyl group on adenosine at position 37 (t(6)A37) in tRNAs that read codons beginning with adenine. Catalyzes the conversion of L-threonine, HCO(3)(-)/CO(2) and ATP to give threonylcarbamoyl-AMP (TC-AMP) as the acyladenylate intermediate, with the release of diphosphate. The polypeptide is Threonylcarbamoyl-AMP synthase (Xanthomonas axonopodis pv. citri (strain 306)).